Reading from the N-terminus, the 507-residue chain is ATP synthase subunit alpha (507 aa).

Position 169 to 176 (169 to 176 (GDRQTGKT)) interacts with ATP.

The protein belongs to the ATPase alpha/beta chains family. F-type ATPases have 2 components, CF(1) - the catalytic core - and CF(0) - the membrane proton channel. CF(1) has five subunits: alpha(3), beta(3), gamma(1), delta(1), epsilon(1). CF(0) has three main subunits: a(1), b(2) and c(9-12). The alpha and beta chains form an alternating ring which encloses part of the gamma chain. CF(1) is attached to CF(0) by a central stalk formed by the gamma and epsilon chains, while a peripheral stalk is formed by the delta and b chains.

It localises to the cell membrane. It carries out the reaction ATP + H2O + 4 H(+)(in) = ADP + phosphate + 5 H(+)(out). Produces ATP from ADP in the presence of a proton gradient across the membrane. The alpha chain is a regulatory subunit. This Desulforudis audaxviator (strain MP104C) protein is ATP synthase subunit alpha.